The primary structure comprises 337 residues: Serpentine receptor class delta-50 (337 aa).

7 helical membrane passes run 10-30, 48-68, 107-127, 147-167, 202-222, 250-270, and 280-300; these read VLIL…SQLL, IYLF…FVLQ, VLFH…IIAF, QLVI…LSPN, SSQT…ALVF, GLTL…TYYI, and LFVE…DPLL.

This sequence belongs to the nematode receptor-like protein srd family.

It is found in the membrane. The polypeptide is Serpentine receptor class delta-50 (Caenorhabditis elegans).